The following is a 236-amino-acid chain: UPF0257 lipoprotein YnfC (236 aa).

An N-terminal signal peptide occupies residues 1–16 (MKKPLLLTLLCMILAG). Cys-17 carries N-palmitoyl cysteine lipidation. Cys-17 carries the S-diacylglycerol cysteine lipid modification.

Belongs to the UPF0257 family.

The protein localises to the cell membrane. The chain is UPF0257 lipoprotein YnfC from Salmonella schwarzengrund (strain CVM19633).